The sequence spans 845 residues: Protein translocase subunit SecA 1 (845 aa).

ATP is bound by residues Gln91, 109–113, and Asp498; that span reads GEGKT. The tract at residues 795–845 is disordered; that stretch reads TDFGTAQHVSAEDGKEKAKKQPIVKGDKVGRNDPCPCGSGKKYKNCHGKEE. Zn(2+)-binding residues include Cys829, Cys831, Cys840, and His841. Residues 835 to 845 show a composition bias toward basic residues; the sequence is KKYKNCHGKEE.

Belongs to the SecA family. As to quaternary structure, monomer and homodimer. Part of the essential Sec protein translocation apparatus which comprises SecA, SecYEG and auxiliary proteins SecDF. Other proteins may also be involved. Zn(2+) serves as cofactor.

The protein localises to the cell membrane. The protein resides in the cytoplasm. The enzyme catalyses ATP + H2O + cellular proteinSide 1 = ADP + phosphate + cellular proteinSide 2.. Its function is as follows. Part of the Sec protein translocase complex. Interacts with the SecYEG preprotein conducting channel. Has a central role in coupling the hydrolysis of ATP to the transfer of proteins into and across the cell membrane, serving as an ATP-driven molecular motor driving the stepwise translocation of polypeptide chains across the membrane. This is Protein translocase subunit SecA 1 from Staphylococcus haemolyticus (strain JCSC1435).